Reading from the N-terminus, the 195-residue chain is Pyridoxal 5'-phosphate synthase subunit PdxT (195 aa).

46–48 (GES) contributes to the L-glutamine binding site. Catalysis depends on C78, which acts as the Nucleophile. L-glutamine contacts are provided by residues R107 and 136-137 (IR). Residues H173 and E175 each act as charge relay system in the active site.

Belongs to the glutaminase PdxT/SNO family. As to quaternary structure, in the presence of PdxS, forms a dodecamer of heterodimers. Only shows activity in the heterodimer.

The enzyme catalyses aldehydo-D-ribose 5-phosphate + D-glyceraldehyde 3-phosphate + L-glutamine = pyridoxal 5'-phosphate + L-glutamate + phosphate + 3 H2O + H(+). It catalyses the reaction L-glutamine + H2O = L-glutamate + NH4(+). It functions in the pathway cofactor biosynthesis; pyridoxal 5'-phosphate biosynthesis. Catalyzes the hydrolysis of glutamine to glutamate and ammonia as part of the biosynthesis of pyridoxal 5'-phosphate. The resulting ammonia molecule is channeled to the active site of PdxS. The sequence is that of Pyridoxal 5'-phosphate synthase subunit PdxT from Dehalococcoides mccartyi (strain ATCC BAA-2100 / JCM 16839 / KCTC 5957 / BAV1).